Consider the following 375-residue polypeptide: Alcohol dehydrogenase 1 (375 aa).

N-acetylalanine is present on Ala1. Residues Cys46, His68, Cys98, Cys101, Cys104, Cys112, and Cys175 each contribute to the Zn(2+) site. Residues 200–205 (GLGGVG), Asp224, Lys229, 293–295 (VGV), and Arg370 contribute to the NAD(+) site.

This sequence belongs to the zinc-containing alcohol dehydrogenase family. Class-I subfamily. As to quaternary structure, homodimer. Requires Zn(2+) as cofactor.

The protein resides in the cytoplasm. The enzyme catalyses a primary alcohol + NAD(+) = an aldehyde + NADH + H(+). It carries out the reaction a secondary alcohol + NAD(+) = a ketone + NADH + H(+). This chain is Alcohol dehydrogenase 1, found in Columba livia (Rock dove).